The primary structure comprises 202 residues: DNA polymerase III subunit epsilon (202 aa).

Residues Asp-23 and Glu-25 each contribute to the a divalent metal cation site. Residues Asp-23 and Glu-25 each coordinate substrate. The active-site Proton acceptor is His-162. Asp-167 is a binding site for a divalent metal cation. Asp-167 serves as a coordination point for substrate.

As to quaternary structure, DNA polymerase III contains a core (composed of alpha, epsilon and theta chains) that associates with a tau subunit. This core dimerizes to form the POLIII' complex. PolIII' associates with the gamma complex (composed of gamma, delta, delta', psi and chi chains) and with the beta chain to form the complete DNA polymerase III complex. The cofactor is Mg(2+). Requires Mn(2+) as cofactor.

It catalyses the reaction DNA(n) + a 2'-deoxyribonucleoside 5'-triphosphate = DNA(n+1) + diphosphate. DNA polymerase III is a complex, multichain enzyme responsible for most of the replicative synthesis in bacteria. The epsilon subunit contain the editing function and is a proofreading 3'-5' exonuclease. This Aquifex aeolicus (strain VF5) protein is DNA polymerase III subunit epsilon (dnaQ).